The chain runs to 52 residues: Conotoxin Ac4.3a (52 aa).

The propeptide occupies 1-11 (SDFRNAAVHER). At glutamine 12 the chain carries Pyrrolidone carboxylic acid. Position 14 is a 4-carboxyglutamate (glutamate 14). 2 O-linked (HexNAc...) threonine glycosylation sites follow: threonine 18 and threonine 20. A 4-hydroxyproline mark is found at proline 28, proline 33, and proline 47. Proline 47 is subject to Proline amide. Residues 48-52 (GRRND) constitute a propeptide that is removed on maturation.

It belongs to the conotoxin A superfamily. Contains 3 disulfide bonds. Expressed by the venom duct.

It is found in the secreted. Functionally, probable neurotoxin with ion channel inhibitor activity. This chain is Conotoxin Ac4.3a, found in Conus achatinus (Little frog cone).